Here is a 226-residue protein sequence, read N- to C-terminus: Chalcone--flavanone isomerase (226 aa).

Thr47, Asn112, and Ser189 together coordinate substrate.

This sequence belongs to the chalcone isomerase family.

It carries out the reaction a chalcone = a flavanone.. Its pathway is secondary metabolite biosynthesis; flavonoid biosynthesis. Functionally, catalyzes the intramolecular cyclization of bicyclic chalcones into tricyclic (S)-flavanones. Responsible for the isomerization of 4,2',4',6'-tetrahydroxychalcone (also termed chalcone) into naringenin. This Allium cepa (Onion) protein is Chalcone--flavanone isomerase (CHI).